We begin with the raw amino-acid sequence, 430 residues long: Histidine--tRNA ligase (430 aa).

The protein belongs to the class-II aminoacyl-tRNA synthetase family. As to quaternary structure, homodimer.

It localises to the cytoplasm. The enzyme catalyses tRNA(His) + L-histidine + ATP = L-histidyl-tRNA(His) + AMP + diphosphate + H(+). The chain is Histidine--tRNA ligase from Lactococcus lactis subsp. cremoris (strain SK11).